The primary structure comprises 438 residues: Trigger factor (438 aa).

One can recognise a PPIase FKBP-type domain in the interval 162 to 247 (GDRVNINYQG…LNKVEAPKLP (86 aa)).

Belongs to the FKBP-type PPIase family. Tig subfamily.

The protein localises to the cytoplasm. The catalysed reaction is [protein]-peptidylproline (omega=180) = [protein]-peptidylproline (omega=0). Functionally, involved in protein export. Acts as a chaperone by maintaining the newly synthesized protein in an open conformation. Functions as a peptidyl-prolyl cis-trans isomerase. The sequence is that of Trigger factor from Nitrosomonas eutropha (strain DSM 101675 / C91 / Nm57).